A 176-amino-acid polypeptide reads, in one-letter code: Oxaleimides biosynthesis cluster protein N (176 aa).

The next 4 membrane-spanning stretches (helical) occupy residues Leu-5–Thr-25, Val-71–Phe-91, Phe-104–Leu-124, and Phe-155–Lys-175.

The protein localises to the membrane. The protein operates within secondary metabolite biosynthesis. In terms of biological role, part of the gene cluster that mediates the biosynthesis of oxaleimides, cytotoxic compounds containing an unusual disubstituted succinimide moiety. The first step of the pathway is provided by the HR-PKS poxF that serves in a new mode of collaborative biosynthesis with the PKS-NRPS poxE, by providing the olefin containing amino acid substrate via the synthesis of an ACP-bound dec-4-enoate. The cytochrome P450 monooxygenase poxM-catalyzed oxidation at the alpha-position creates the enzyme-bound 2-hydroxydec-4-enoyl-ACP thioester, which may be prone to spontaneous hydrolysis to yield 2-hydroxydec-4-enoic acid due to increased electrophilicity of the carbonyl. 2-hydroxydec-4-enoic acid can then be further oxidized by poxM to yield the alpha-ketoacid 2-oxodec-4-enoicacid, which is reductively aminated by the aminotransferase poxL to yield (S,E)-2-aminodec-4-enoic acid. The Hybrid PKS-NRPS synthetase poxE then performs condensation between the octaketide product of its PKS modules and the amino group of (S,E)-2-aminodec-4-enoic acid which is activated and incorporated by the adenylation domain. The resulting aminoacyl product can be cyclized by the Diels-Alderase PoxQ and reductively released by the reductive (R) domain of poxE to yield an aldehyde intermediate. The released aldehyde is then substrate for a Knoevenagel condensation by the hydrolyase poxO followed by an oxidation at the 5-position of the pyrrolidone ring. The presence of the olefin from the amino acid building block allows for migration of the substituted allyl group to occur. This allylic transposition reaction takes place in a conjugate addition, semipinacol-like fashion to yield a succinimide intermediate. Iterative two-electron oxidations of the C7 methyl of the succinimide intermediate to the carboxylic acid can be catalyzed by one of two remaining cytochrome P450 monooxygenasess poxC or poxD to yield oxaleimide A. Subsequent oxidation yields the maleimide scaffold oxaleimide I. Both oxaleimide A and oxaleimide I can undergo oxidative modifications in the decalin ring to yield the series of products oxaleimides B to H. This Penicillium oxalicum (strain 114-2 / CGMCC 5302) (Penicillium decumbens) protein is Oxaleimides biosynthesis cluster protein N.